Reading from the N-terminus, the 201-residue chain is Retinol-binding protein 4 (201 aa).

The signal sequence occupies residues 1–18 (MEWVWALVVLAALGSAGA). Intrachain disulfides connect Cys-22–Cys-178, Cys-88–Cys-192, and Cys-138–Cys-147. A substrate-binding site is contributed by Gln-116. Arg-139 bears the Omega-N-methylarginine mark.

The protein belongs to the calycin superfamily. Lipocalin family. In terms of assembly, interacts with TTR. Interaction with TTR prevents its loss by filtration through the kidney glomeruli. Interacts with STRA6.

It is found in the secreted. Functionally, retinol-binding protein that mediates retinol transport in blood plasma. Delivers retinol from the liver stores to the peripheral tissues. Transfers the bound all-trans retinol to STRA6, that then facilitates retinol transport across the cell membrane. This is Retinol-binding protein 4 (RBP4) from Equus caballus (Horse).